Here is a 1635-residue protein sequence, read N- to C-terminus: MSTLSQQLSQLGGGSTVDRTWKLKQHSKSLIYEPQVAQDQDFSFIHAVGVEGLRDLVSLDSRFAQFENNLFSDTSIDVDRYVQTQEQNDLLDKAISAFLSLIGPYLMLSPAVKALEWLVRRFHVNQMNAEQLLLCVLPYYDQDIYLRVADVIIKLPPLFVFLNKSKSAAQNPPRNLLIRAFSADMRLFELITEYIVGQTTTKTSYQRQLSFWSQFAIYGLVADKADPERMLEIYLPALAKLVVTIDTDCQIAAYMVLTVLGNKMPLNKEVFNALVETIAANWTQKAIKSGILCITQMYQQKQEPEVLPTSVMTALNKAGFQPSDVVALSQKYKMALFTLGYCMALLRNPDAANFKGLEEIISNTQFGSNESTFLMRYIVDWALAKETNTSVAALAAPVIAKWVTRGETVPELDQLELKLQTVFTEAAVEEMEVEEIQEDVDVESLVEQAKKAASQTTTYFSTKTSENYAELSKIFVQLIERGYTMDKFVSMFSSDIASLTFFARIWASPSPLLARLAAVEAAKTIITAAGEADFQNLIPYTCIALSDASQRVRKAAASFAEVLKSKQNKKPIWGVEKIYTNDCSYLGSGDVTVLLNALSLEECILDESFVIRQVSDMISKKKGYKSAFSTAVLAYLGSHAVSQEIIAIRTSLLTLVTSSEEPIVPTTKVVEPLYINPPNDLAYITELIRTVTDKTGIKFLESLIKNDSPIYDEVCDIVTQRLVKLWPTLKGDAHLGLFRFFVDLSLDKDVPFDSLDVLAHVDVPTKVFISLLDDCKVEQNTTSMDAPSDESTKRRRRSSSSTVRNLLQGKLHHIAERNLRKVSLVLELLVASKTTDDALLGPLFTQLGEILTLGTDSNLPIDYCQSLLADVLLNIIRANQHDGASIDRDIRVDIVVSAIRTASNAQIQNKYLLLVAELATVAPTLVLHSVMPIFTFMGANTLRQDDDFSVHVIEQTVARIVPCLAGNTDKVDMLLVSFVTAFPHIPQHRRVKLFGELVRALDASGTKDALATLLFLFAQKSAELKTARKTSEVSAIAKFCDSLFKLFDASKQLAVVLPYVTLVQELYAIIATDPKTKEKEKKTRRQIFLQVDKELEVSPIDFLVVLLESRILPLQAGLVQSPEALKIAENVLTVLIESQYPELLNVILSLLPLPLFVTVAGRLGSSVYKTVLARFSSGSIEEEDTKASDTLLESLHSLLKSTTDTGDLVLLLQIVETVASGFPKCSDALLVTCAGEAVAQLKNSDDDVFIQAVSVLSSLCLRLGARMIGLFPATISSVLARDSSDNLIALSVLALFATFIKRLPSFMVSSLPKIFEFALKCPADTDTRKQLFVVCVETMDSRVVLQTLCDSWKFVEGFENARLFADTLDLAVAEADKKQIHSKADSLITLCLEAFDSSLKLEANTAARVQNLFIKCLIAIVLKLNDKTFRPLFVKIVDWNTPERSTLLFKIVCRLQENLKSIVTSYYGYIIDLALEILNKASAITPALQRNILSSLYSSFRFDREEFWNNEERFTKISDALGAQFPYLTKVAPENSKLLIKAVVALCELASEDQKKQLNDMMIKLLRQAPLYGSRCFAALFNNVGEEFLPFLPQLVPQIAELLESEDEKVESAVRAELIPAVEEVLGESLDRYLA.

Residues 781-803 (TTSMDAPSDESTKRRRRSSSSTV) form a disordered region. A run of 2 helical transmembrane segments spans residues 1141–1161 (PELLNVILSLLPLPLFVTVAG) and 1288–1308 (IALSVLALFATFIKRLPSFMV).

This sequence belongs to the HEATR1/UTP10 family. Component of the ribosomal small subunit (SSU) processome.

Its subcellular location is the nucleus. It is found in the nucleolus. The protein resides in the membrane. Its function is as follows. Involved in nucleolar processing of pre-18S ribosomal RNA. Involved in ribosome biosynthesis. In Yarrowia lipolytica (strain CLIB 122 / E 150) (Yeast), this protein is U3 small nucleolar RNA-associated protein 10.